The sequence spans 412 residues: Tryptophan 2,3-dioxygenase (412 aa).

Residues Phe-79–His-83, Tyr-146, and Arg-150 each bind substrate. His-346 is a binding site for heme. Thr-360 lines the substrate pocket.

The protein belongs to the tryptophan 2,3-dioxygenase family. Homotetramer. Heme is required as a cofactor.

The enzyme catalyses L-tryptophan + O2 = N-formyl-L-kynurenine. It functions in the pathway amino-acid degradation; L-tryptophan degradation via kynurenine pathway; L-kynurenine from L-tryptophan: step 1/2. In terms of biological role, heme-dependent dioxygenase that catalyzes the oxidative cleavage of the L-tryptophan (L-Trp) pyrrole ring and converts L-tryptophan to N-formyl-L-kynurenine. Catalyzes the oxidative cleavage of the indole moiety. The polypeptide is Tryptophan 2,3-dioxygenase (Sorangium cellulosum (strain So ce56) (Polyangium cellulosum (strain So ce56))).